We begin with the raw amino-acid sequence, 253 residues long: MYIYRKPYEQNYWNNFILLSLYVNNKRVGVNKNITKLEYILLDIFLHGPLHTEFINYLEITNYINNRTYLYEKMLKEKSVNAINIILPPVMHTASFEYNYEIIEDLDSNKILNIYILNNKCYYCRKLKDDSYWEKFPFNEIPIFVNDKKVGLRLKTDKLKTTKNLTKVEYYLLDIFWFGPLKIEASEHYEKIMRQIKDRNKKYMCLYYEKIINGINIIFNISNNIEYKKFLNNDYSIKEMINVEHILTIYVLT.

This sequence belongs to the A.longa ORF167/ORF288 family.

It is found in the plastid. This is an uncharacterized protein from Euglena longa (Euglenophycean alga).